Here is a 572-residue protein sequence, read N- to C-terminus: Outer spore wall assembly protein SHE10 (572 aa).

A signal peptide spans 1-19; it reads MRAISKLFVFTVLVLGSLQ. 2 coiled-coil regions span residues 351–372 and 485–510; these read SQAN…REVV and FQER…LREQ. Positions 539-572 are disordered; that stretch reads STSWSVPPADARAEPASGSPIQQAASEAAQQPSV. Over residues 560 to 572 the composition is skewed to low complexity; it reads QQAASEAAQQPSV.

This sequence belongs to the SHE10 family. Component of the mitochondria-localized RNase mitochondrial RNA-processing (RNase MRP) composed of one single RNA encoded by the NME1 gene and at least 31 proteins. Absent in the nucleus-localized RNase MRP (NuMRP).

The protein localises to the mitochondrion. In terms of biological role, involved in spore wall assembly. May be a component of the mitochondrial RNase MRP (MtMRP), a ribonucleoprotein endoribonuclease involved in the cleaving RNA transcripts to generate primers for DNA replication in mitochondria. In Eremothecium gossypii (strain ATCC 10895 / CBS 109.51 / FGSC 9923 / NRRL Y-1056) (Yeast), this protein is Outer spore wall assembly protein SHE10.